The chain runs to 918 residues: Probable lipoxygenase 6 (918 aa).

The segment at 56-76 (AASPSSGIKGGGAGERRPAPE) is disordered. Residues 90–218 (QKEDIKEAVA…ELPTKRVFFS (129 aa)) enclose the PLAT domain. Residues 221–918 (PYLPSETPPG…CRGVPNSISI (698 aa)) form the Lipoxygenase domain. 5 residues coordinate Fe cation: histidine 573, histidine 578, histidine 765, asparagine 769, and isoleucine 918.

This sequence belongs to the lipoxygenase family. It depends on Fe cation as a cofactor.

It catalyses the reaction (9Z,12Z)-octadecadienoate + O2 = (13S)-hydroperoxy-(9Z,11E)-octadecadienoate. The catalysed reaction is (9Z,12Z,15Z)-octadecatrienoate + O2 = (13S)-hydroperoxy-(9Z,11E,15Z)-octadecatrienoate. It functions in the pathway lipid metabolism; oxylipin biosynthesis. Plant lipoxygenase may be involved in a number of diverse aspects of plant physiology including growth and development, pest resistance, and senescence or responses to wounding. Catalyzes the hydroperoxidation of lipids containing a cis,cis-1,4-pentadiene structure. The polypeptide is Probable lipoxygenase 6 (Oryza sativa subsp. japonica (Rice)).